The chain runs to 198 residues: Fe/S biogenesis protein NfuA (198 aa).

Residues Cys-155 and Cys-158 each contribute to the [4Fe-4S] cluster site.

Belongs to the NfuA family. Homodimer. The cofactor is [4Fe-4S] cluster.

Its function is as follows. Involved in iron-sulfur cluster biogenesis. Binds a 4Fe-4S cluster, can transfer this cluster to apoproteins, and thereby intervenes in the maturation of Fe/S proteins. Could also act as a scaffold/chaperone for damaged Fe/S proteins. The sequence is that of Fe/S biogenesis protein NfuA from Haemophilus influenzae (strain 86-028NP).